Consider the following 136-residue polypeptide: Putative LysR family substrate binding domain-containing protein YagP (136 aa).

It belongs to the LysR transcriptional regulatory family.

In Escherichia coli (strain K12), this protein is Putative LysR family substrate binding domain-containing protein YagP (yagP).